The following is a 183-amino-acid chain: ATP-dependent protease subunit HslV (183 aa).

Residue threonine 9 is part of the active site. Na(+)-binding residues include alanine 164, cysteine 167, and threonine 170.

It belongs to the peptidase T1B family. HslV subfamily. As to quaternary structure, a double ring-shaped homohexamer of HslV is capped on each side by a ring-shaped HslU homohexamer. The assembly of the HslU/HslV complex is dependent on binding of ATP.

It is found in the cytoplasm. It carries out the reaction ATP-dependent cleavage of peptide bonds with broad specificity.. With respect to regulation, allosterically activated by HslU binding. Protease subunit of a proteasome-like degradation complex believed to be a general protein degrading machinery. The polypeptide is ATP-dependent protease subunit HslV (Hydrogenovibrio crunogenus (strain DSM 25203 / XCL-2) (Thiomicrospira crunogena)).